The primary structure comprises 569 residues: Oxygen-dependent choline dehydrogenase (569 aa).

FAD is bound at residue 9 to 38 (DYVIIGGGSAGSVLGNRLSEDKDKEVLVLE). The active-site Proton acceptor is the H475.

Belongs to the GMC oxidoreductase family. It depends on FAD as a cofactor.

The enzyme catalyses choline + A = betaine aldehyde + AH2. The catalysed reaction is betaine aldehyde + NAD(+) + H2O = glycine betaine + NADH + 2 H(+). The protein operates within amine and polyamine biosynthesis; betaine biosynthesis via choline pathway; betaine aldehyde from choline (cytochrome c reductase route): step 1/1. Functionally, involved in the biosynthesis of the osmoprotectant glycine betaine. Catalyzes the oxidation of choline to betaine aldehyde and betaine aldehyde to glycine betaine at the same rate. The polypeptide is Oxygen-dependent choline dehydrogenase (Staphylococcus aureus (strain COL)).